The following is a 396-amino-acid chain: Interactor of constitutive active ROPs 5 (396 aa).

Disordered regions lie at residues 1 to 49 (MQTP…TQIP) and 99 to 122 (ALKR…NASE). Coiled coils occupy residues 67–124 (KKRT…SEDS) and 158–366 (LSSA…TAAS). A compositionally biased stretch (basic and acidic residues) spans 99–115 (ALKREAQEEAEDAKHQL).

Belongs to the ICR family. Component of the active ARAC10-IRC5-KIN13A complex. Homooligomer. Interacts (via C-terminus) with ARAC4, ARAC10, ARAC11 and (via N-terminus) with KIN13A (via C-terminus), but no interactions with SEC3A. Expressed in xylem cells in the roots and in stamens, petals and pollen.

It localises to the cell membrane. The protein resides in the cytoplasm. The protein localises to the cytoskeleton. Its function is as follows. ROP effector binding specifically activated ROPs and linking them to the microtubule cytoskeleton. Involved in ROP-regulated polar growth. Involved in local disassembly of cortical microtubules when associated with ARAC10 and KIN13A and conversely also mediates the elimination of ARAC10 from the plasma membrane by the cortical microtubules. Accumulates at the plus end of shrinking microtubules. Targets KIN13A to microtubules. The protein is Interactor of constitutive active ROPs 5 (ICR5) of Arabidopsis thaliana (Mouse-ear cress).